Consider the following 175-residue polypeptide: MIISTSRFGQVELKQEDVLTFTEGLLGFADLRKFVLLDDPNDEIFAWLQSCEAPAIAFPVLEPELFAPQYKATLTKGDMEALKLTAQDKARYFSIVTIPDDPTLMTANLKAPVVVNIEARTARQCVLQDNNLAIREPIFTKLQQRVVQNPAVAIKNQSTGIDVATKLHVVRDAEL.

Belongs to the FliW family. Interacts with translational regulator CsrA and flagellin(s).

The protein resides in the cytoplasm. Functionally, acts as an anti-CsrA protein, binds CsrA and prevents it from repressing translation of its target genes, one of which is flagellin. Binds to flagellin and participates in the assembly of the flagellum. The protein is Flagellar assembly factor FliW of Bdellovibrio bacteriovorus (strain ATCC 15356 / DSM 50701 / NCIMB 9529 / HD100).